Here is a 1887-residue protein sequence, read N- to C-terminus: Protein TIC 214 (1887 aa).

The next 6 helical transmembrane spans lie at 18-38 (IINS…FSIG), 64-84 (FITG…HLAL), 87-107 (PHTI…WNNH), 124-144 (LSIQ…HFIL), 172-192 (VGWL…LVWI), and 221-241 (IFSI…PSPI). Disordered regions lie at residues 248–300 (EASK…EGWD), 786–805 (EEQT…DNKR), and 1569–1603 (LPSN…NLSP). Acidic residues predominate over residues 256-268 (VESEEERDVEIET). Residues 775–816 (KEREFKILESREEQTKREEKKEKDKKEDNKRKEQARIAIEEA) adopt a coiled-coil conformation. Residues 1578–1597 (RSQETKEPPSQRERGSDIEN) are compositionally biased toward basic and acidic residues.

This sequence belongs to the TIC214 family. In terms of assembly, part of the Tic complex.

It is found in the plastid. It localises to the chloroplast inner membrane. In terms of biological role, involved in protein precursor import into chloroplasts. May be part of an intermediate translocation complex acting as a protein-conducting channel at the inner envelope. The sequence is that of Protein TIC 214 from Solanum bulbocastanum (Wild potato).